A 260-amino-acid polypeptide reads, in one-letter code: Carbonic anhydrase 3 (260 aa).

The residue at position 2 (alanine 2) is an N-acetylalanine. The region spanning 3 to 259 (KEWGYASHNG…IKGRVVRASF (257 aa)) is the Alpha-carbonic anhydrase domain. A phosphoserine mark is found at serine 29, serine 43, serine 48, serine 50, and serine 55. Residues 64–67 (KTCR) form an involved in proton transfer region. The residue at position 73 (threonine 73) is a Phosphothreonine. Zn(2+) is bound by residues histidine 94, histidine 96, and histidine 119. At tyrosine 127 the chain carries Phosphotyrosine. The residue at position 129 (threonine 129) is a Phosphothreonine. Residues cysteine 182 and cysteine 187 each carry the S-glutathionyl cysteine modification. Residue 198-199 (TT) coordinates substrate. Threonine 216 bears the Phosphothreonine mark. A Phosphoserine modification is found at serine 219.

It belongs to the alpha-carbonic anhydrase family. Zn(2+) is required as a cofactor. S-thiolated both by thiol-disulfide exchange with glutathione disulfide and by oxyradical-initiated S-thiolation with reduced glutathione. Post-translationally, S-glutathionylated in hepatocytes under oxidative stress. Expressed in liver and muscle.

It localises to the cytoplasm. It catalyses the reaction hydrogencarbonate + H(+) = CO2 + H2O. Its activity is regulated as follows. Inhibited by acetazolamide. Functionally, reversible hydration of carbon dioxide. This Rattus norvegicus (Rat) protein is Carbonic anhydrase 3 (Ca3).